A 981-amino-acid polypeptide reads, in one-letter code: Proline-rich transmembrane protein 3 (981 aa).

An N-terminal signal peptide occupies residues 1–27 (MASSPWGCVCGLLLLLLPLLGTGPALG). The Extracellular segment spans residues 28-474 (RGFPRPLENS…RVLSFSWELH (447 aa)). Disordered regions lie at residues 43–107 (PGAH…GAQR) and 169–457 (PPSL…TAPP). Basic and acidic residues predominate over residues 65 to 85 (PRADSHRNSDVRHAPAEEMPE). Residues 297-302 (SWEVSS) form an O-glycosylated at one site region. Residue Ser329 is glycosylated (O-linked (GalNAc...) serine). The segment covering 331-340 (APDRPSKPER) has biased composition (basic and acidic residues). Thr363 carries an O-linked (GalNAc...) threonine glycan. N-linked (GlcNAc...) asparagine glycosylation is present at Asn379. Residues 411–427 (APSTSRRGLIRVTTQRA) show a composition bias toward polar residues. A compositionally biased stretch (low complexity) spans 437–457 (TASSMASAPASSPPANATAPP). A helical membrane pass occupies residues 475 to 495 (VYGVGVLFLLPALLALAALAA). The Cytoplasmic segment spans residues 496–501 (APAGPR). The helical transmembrane segment at 502–522 (LALVAAVLVLVASALRSAYML) threads the bilayer. Topologically, residues 523–542 (TDPYGSQARLGVRGGLVLYN) are extracellular. The helical transmembrane segment at 543–563 (LPFPLLLTALAALTLLGLGAG) threads the bilayer. Topologically, residues 564 to 570 (LPPPLQN) are cytoplasmic. The helical transmembrane segment at 571 to 591 (PLLLGAVALVHGVGLLATDLL) threads the bilayer. Topologically, residues 592–598 (STWSVLN) are extracellular. The chain crosses the membrane as a helical span at residues 599-619 (LLTQGLSCAWGAAVALGTLCL). The Cytoplasmic portion of the chain corresponds to 620–638 (CRRRLLDGPRGWDASPGPR). Residues 639–659 (LLAVAGALGLLASGLQLAAAL) form a helical membrane-spanning segment. Topologically, residues 660–679 (WLYPGPGRVGRFSWAWWGVH) are extracellular. The helical transmembrane segment at 680-700 (FWLRLLELTWALALALAAVAA) threads the bilayer. At 701-981 (ARPRPPTEHA…RSASSDTIEL (281 aa)) the chain is on the cytoplasmic side. The interval 759–807 (AESGQLATPSSGAWGSAASLGRGPQGGPGLSRNGVGPAPSLSELDLRPP) is disordered. Positions 765–780 (ATPSSGAWGSAASLGR) are enriched in low complexity. Residue Ser777 is modified to Phosphoserine. Arg780 carries the post-translational modification Omega-N-methylarginine. A phosphoserine mark is found at Ser789, Ser798, Ser808, Ser815, Ser854, Ser874, Ser902, Ser903, and Ser911. Residues 836-865 (LRGLASPPPGGALRPRRGSHPKAELDDAGS) form a disordered region. Residues 937 to 981 (TVQLLPAPTPAPDSTAARQGDGQGEVQPRGKPGESRSASSDTIEL) form a disordered region. Residues 972 to 981 (RSASSDTIEL) are compositionally biased toward polar residues.

Its subcellular location is the membrane. The protein is Proline-rich transmembrane protein 3 (PRRT3) of Homo sapiens (Human).